A 1888-amino-acid polypeptide reads, in one-letter code: Zinc finger protein 106 (1888 aa).

A C2H2-type 1; atypical zinc finger spans residues R5–H29. The segment at H43–H67 adopts a C2H2-type 2; atypical zinc-finger fold. The disordered stretch occupies residues K68–K187. A compositionally biased stretch (acidic residues) spans E75–F89. Basic and acidic residues-rich tracts occupy residues D90–E108, S118–S138, and P150–G160. A Glycyl lysine isopeptide (Lys-Gly) (interchain with G-Cter in SUMO2) cross-link involves residue K91. A Glycyl lysine isopeptide (Lys-Gly) (interchain with G-Cter in SUMO2) cross-link involves residue K155. The segment covering F161–N175 has biased composition (polar residues). Glycyl lysine isopeptide (Lys-Gly) (interchain with G-Cter in SUMO2) cross-links involve residues K265 and K309. 2 disordered regions span residues K287–P326 and R338–R362. Positions S296–A311 are enriched in basic and acidic residues. Positions T342–N357 are enriched in polar residues. Residues K375, K384, K390, K435, K469, and K479 each participate in a glycyl lysine isopeptide (Lys-Gly) (interchain with G-Cter in SUMO2) cross-link. 2 disordered regions span residues K410 to I437 and T453 to S525. Residues G481–S491 are compositionally biased toward basic residues. Over residues L507–S525 the composition is skewed to polar residues. Glycyl lysine isopeptide (Lys-Gly) (interchain with G-Cter in SUMO2) cross-links involve residues K524, K534, and K544. Residues K537 to H617 are disordered. The span at N551–L572 shows a compositional bias: polar residues. K577 is covalently cross-linked (Glycyl lysine isopeptide (Lys-Gly) (interchain with G-Cter in SUMO2)). A compositionally biased stretch (basic and acidic residues) spans K577 to K593. The span at S597 to D613 shows a compositional bias: polar residues. K620 is covalently cross-linked (Glycyl lysine isopeptide (Lys-Gly) (interchain with G-Cter in SUMO2)). The interval S635–S661 is disordered. Residues G644 to S661 show a composition bias toward polar residues. Residues S657 and S677 each carry the phosphoserine modification. Glycyl lysine isopeptide (Lys-Gly) (interchain with G-Cter in SUMO2) cross-links involve residues K687, K700, K721, K738, K758, K792, and K824. A disordered region spans residues N696 to P728. Residues S876, S878, S881, and S909 each carry the phosphoserine modification. The disordered stretch occupies residues T894–Q920. Residues A904–Q920 are compositionally biased toward polar residues. K921 participates in a covalent cross-link: Glycyl lysine isopeptide (Lys-Gly) (interchain with G-Cter in SUMO2). S953 carries the phosphoserine modification. Residues A968–Q986 are compositionally biased toward basic and acidic residues. 3 disordered regions span residues A968–Q1064, E1281–D1461, and Q1468–L1487. The segment covering G992 to L1008 has biased composition (low complexity). Residues T1013–E1022 are compositionally biased toward polar residues. T1036 carries the post-translational modification Phosphothreonine. 3 positions are modified to phosphoserine: S1040, S1041, and S1046. Over residues K1050–K1060 the composition is skewed to basic residues. A compositionally biased stretch (polar residues) spans E1281–S1296. Phosphoserine occurs at positions 1291, 1293, and 1296. K1310 is covalently cross-linked (Glycyl lysine isopeptide (Lys-Gly) (interchain with G-Cter in SUMO2)). Residues S1312–S1321 show a composition bias toward low complexity. Residue S1313 is modified to Phosphoserine. A Glycyl lysine isopeptide (Lys-Gly) (interchain with G-Cter in SUMO2) cross-link involves residue K1335. The segment covering Q1338–S1354 has biased composition (polar residues). At S1339 the chain carries Phosphoserine. Over residues S1360–R1373 the composition is skewed to basic residues. S1381 carries the post-translational modification Phosphoserine. T1383 is modified (phosphothreonine). Glycyl lysine isopeptide (Lys-Gly) (interchain with G-Cter in SUMO2) cross-links involve residues K1391, K1403, K1406, and K1460. The span at G1450 to D1461 shows a compositional bias: basic and acidic residues. The segment covering P1470–L1487 has biased composition (polar residues). A Phosphoserine modification is found at S1474. Residues K1492 and K1509 each participate in a glycyl lysine isopeptide (Lys-Gly) (interchain with G-Cter in SUMO2) cross-link. Positions K1509–S1531 are disordered. 6 WD repeats span residues G1534–E1573, H1575–Q1618, H1659–T1700, G1703–K1742, G1743–V1780, and G1783–C1820. K1590 is covalently cross-linked (Glycyl lysine isopeptide (Lys-Gly) (interchain with G-Cter in SUMO2)). Residue K1742 forms a Glycyl lysine isopeptide (Lys-Gly) (interchain with G-Cter in SUMO2) linkage. A C2H2-type 3; atypical zinc finger spans residues Y1818–H1843. K1869 is covalently cross-linked (Glycyl lysine isopeptide (Lys-Gly) (interchain with G-Cter in SUMO2)).

Interacts with KNOP1. Interacts with TARDBP and NUP107. Interacts (via N-terminus) with RBM39. Interacts with the SH3 domains of FYN and GRB2. Phosphorylated by FYN in vitro. In terms of tissue distribution, widely expressed, with strongest expression in skeletal muscle, heart and brain (at protein level). Detected in spinal cord motor neurons.

It localises to the nucleus. Its subcellular location is the nucleolus. It is found in the nucleus speckle. In terms of biological role, RNA-binding protein. Specifically binds to 5'-GGGGCC-3' sequence repeats in RNA. Essential for maintenance of peripheral motor neuron and skeletal muscle function. Required for normal expression and/or alternative splicing of a number of genes in spinal cord and skeletal muscle, including the neurite outgrowth inhibitor RTN4. Also contributes to normal mitochondrial respiratory function in motor neurons, via an unknown mechanism. In Mus musculus (Mouse), this protein is Zinc finger protein 106 (Znf106).